An 849-amino-acid polypeptide reads, in one-letter code: Thrombospondin type-1 domain-containing protein 1 (849 aa).

The first 24 residues, methionine 1–alanine 24, serve as a signal peptide directing secretion. The Extracellular segment spans residues glutamate 25–asparagine 413. 7 N-linked (GlcNAc...) asparagine glycosylation sites follow: asparagine 39, asparagine 50, asparagine 55, asparagine 66, asparagine 77, asparagine 106, and asparagine 303. The TSP type-1 domain occupies isoleucine 340–alanine 393. Cystine bridges form between cysteine 352–cysteine 387, cysteine 356–cysteine 392, and cysteine 367–cysteine 377. Residues valine 414–threonine 434 traverse the membrane as a helical segment. Topologically, residues leucine 435–isoleucine 849 are cytoplasmic. Position 463 is a phosphoserine (serine 463). Disordered stretches follow at residues serine 472–phenylalanine 516, lysine 595–serine 799, and glycine 828–isoleucine 849. The span at serine 479–glycine 493 shows a compositional bias: low complexity. Residues serine 636–alanine 651 show a composition bias toward basic residues. A compositionally biased stretch (basic and acidic residues) spans serine 652 to serine 666. Over residues serine 720–proline 732 the composition is skewed to pro residues.

In terms of assembly, part of a complex composed of THSD1, PTK2/FAK1, TLN1 and VCL. Interacts with TLN1.

It localises to the endosome membrane. It is found in the cell junction. The protein resides in the focal adhesion. In terms of biological role, is a positive regulator of nascent focal adhesion assembly, involved in the modulation of endothelial cell attachment to the extracellular matrix. The sequence is that of Thrombospondin type-1 domain-containing protein 1 (THSD1) from Bos taurus (Bovine).